We begin with the raw amino-acid sequence, 67 residues long: Large ribosomal subunit protein bL32c (67 aa).

This sequence belongs to the bacterial ribosomal protein bL32 family.

The protein resides in the plastid. The protein localises to the chloroplast. In Chara vulgaris (Common stonewort), this protein is Large ribosomal subunit protein bL32c.